The chain runs to 279 residues: Diaminopimelate epimerase (279 aa).

Substrate contacts are provided by N13, Q46, and N66. C75 (proton donor) is an active-site residue. Residues 76–77 (GN), N161, N194, and 212–213 (ER) each bind substrate. C221 (proton acceptor) is an active-site residue. Substrate is bound at residue 222-223 (GT).

The protein belongs to the diaminopimelate epimerase family. As to quaternary structure, homodimer.

The protein localises to the cytoplasm. It catalyses the reaction (2S,6S)-2,6-diaminopimelate = meso-2,6-diaminopimelate. It participates in amino-acid biosynthesis; L-lysine biosynthesis via DAP pathway; DL-2,6-diaminopimelate from LL-2,6-diaminopimelate: step 1/1. Its function is as follows. Catalyzes the stereoinversion of LL-2,6-diaminopimelate (L,L-DAP) to meso-diaminopimelate (meso-DAP), a precursor of L-lysine and an essential component of the bacterial peptidoglycan. This is Diaminopimelate epimerase from Alkalilimnicola ehrlichii (strain ATCC BAA-1101 / DSM 17681 / MLHE-1).